We begin with the raw amino-acid sequence, 1130 residues long: 3-hydroxy-3-methylglutaryl-coenzyme A reductase 1 (1130 aa).

Topologically, residues 1–46 are cytoplasmic; it reads MATSLITRKLRSAEATNDVEPGWLKRQVTGVLQSISSHACQHPIHT. A helical transmembrane segment spans residues 47–67; it reads IVVIALLASTTYVGLLEGSLF. Topologically, residues 68–242 are lumenal; the sequence is DSVRNSRNIA…DLIKHAETID (175 aa). A glycan (N-linked (GlcNAc...) asparagine) is linked at Asn148. An SSD domain is found at 242 to 415; sequence DIVIMTLGYL…FTFYTTILCI (174 aa). The chain crosses the membrane as a helical span at residues 243–263; it reads IVIMTLGYLSMHLSFVSLFFS. Topologically, residues 264–270 are cytoplasmic; that stretch reads MRRLGSN. A helical membrane pass occupies residues 271 to 291; it reads FWLAATVLFSGVFAFLFGLLV. Residues 292–296 are Lumenal-facing; sequence TTKLG. A helical transmembrane segment spans residues 297 to 317; that stretch reads VPINVLLLSEGLPFLVVTIGF. The Cytoplasmic portion of the chain corresponds to 318-366; sequence EKPIILTRAVLTAAADNRGRAGQASSSTTKSIQDSIQTAIKEQGFEIIR. Residues 367-387 form a helical membrane-spanning segment; that stretch reads DYCIEIAILIAGAASGVQGGL. At 388–389 the chain is on the lumenal side; it reads RQ. The helical transmembrane segment at 390-410 threads the bilayer; the sequence is FCFLAAWILFFDCVLLFTFYT. The Cytoplasmic portion of the chain corresponds to 411-476; that stretch reads TILCIKLEIN…RKLRSSSVRR (66 aa). The chain crosses the membrane as a helical span at residues 477–497; it reads FKILMVGGFVLVNVVNLSTIP. Over 498–601 the chain is Lumenal; that stretch reads FRDSSQGAGL…ESLLKSIEDP (104 aa). The helical transmembrane segment at 602–622 threads the bilayer; sequence IISKWIIAALTLSIILNGYLF. Topologically, residues 623–1130 are cytoplasmic; that stretch reads NAARWSIKEP…ARGLTMSSSE (508 aa). The Charge relay system role is filled by Glu792. 798 to 804 lines the CoA pocket; the sequence is STSRGAK. NADP(+) contacts are provided by residues 859–861 and 886–894; these read SRF and DAMGMNMIS. The Charge relay system role is filled by Lys926. Residue 955–957 participates in CoA binding; that stretch reads VLK. The Charge relay system role is filled by Asp1002. 1097–1098 is a binding site for CoA; sequence AH. The Proton donor role is filled by His1098. 1102 to 1103 lines the NADP(+) pocket; sequence NR. The span at 1103-1122 shows a compositional bias: low complexity; sequence RSAATTRTSTPVSAAVSAAR. The disordered stretch occupies residues 1103-1130; the sequence is RSAATTRTSTPVSAAVSAARGLTMSSSE.

Belongs to the HMG-CoA reductase family.

Its subcellular location is the endoplasmic reticulum membrane. The enzyme catalyses (R)-mevalonate + 2 NADP(+) + CoA = (3S)-3-hydroxy-3-methylglutaryl-CoA + 2 NADPH + 2 H(+). The protein operates within metabolic intermediate biosynthesis; (R)-mevalonate biosynthesis; (R)-mevalonate from acetyl-CoA: step 3/3. Functionally, HMG-CoA reductase; part of the first module of ergosterol biosynthesis pathway that includes the early steps of the pathway, conserved across all eukaryotes, and which results in the formation of mevalonate from acetyl-coenzyme A (acetyl-CoA). Hmg1 and hmg2 catalyze the reduction of hydroxymethylglutaryl-CoA (HMG-CoA) to mevalonate. The first module starts with the action of the cytosolic acetyl-CoA acetyltransferase erg10B that catalyzes the formation of acetoacetyl-CoA. The hydroxymethylglutaryl-CoA synthases erg13A and erg13B then condense acetyl-CoA with acetoacetyl-CoA to form HMG-CoA. The rate-limiting step of the early module is the reduction to mevalonate by the 3-hydroxy-3-methylglutaryl-coenzyme A (HMG-CoA) reductases hmg1 and hmg2. Mevalonate is also a precursor for the extracellular siderophore triacetylfusarinine C (TAFC). This is 3-hydroxy-3-methylglutaryl-coenzyme A reductase 1 from Aspergillus fumigatus (strain ATCC MYA-4609 / CBS 101355 / FGSC A1100 / Af293) (Neosartorya fumigata).